A 372-amino-acid polypeptide reads, in one-letter code: 4-hydroxy-3-methylbut-2-en-1-yl diphosphate synthase (flavodoxin) (372 aa).

4 residues coordinate [4Fe-4S] cluster: Cys-270, Cys-273, Cys-305, and Glu-312.

This sequence belongs to the IspG family. It depends on [4Fe-4S] cluster as a cofactor.

The enzyme catalyses (2E)-4-hydroxy-3-methylbut-2-enyl diphosphate + oxidized [flavodoxin] + H2O + 2 H(+) = 2-C-methyl-D-erythritol 2,4-cyclic diphosphate + reduced [flavodoxin]. It functions in the pathway isoprenoid biosynthesis; isopentenyl diphosphate biosynthesis via DXP pathway; isopentenyl diphosphate from 1-deoxy-D-xylulose 5-phosphate: step 5/6. Converts 2C-methyl-D-erythritol 2,4-cyclodiphosphate (ME-2,4cPP) into 1-hydroxy-2-methyl-2-(E)-butenyl 4-diphosphate. This is 4-hydroxy-3-methylbut-2-en-1-yl diphosphate synthase (flavodoxin) from Salmonella typhi.